The primary structure comprises 116 residues: Ribosome-binding factor A (116 aa).

Belongs to the RbfA family. In terms of assembly, monomer. Binds 30S ribosomal subunits, but not 50S ribosomal subunits or 70S ribosomes.

It localises to the cytoplasm. Functionally, one of several proteins that assist in the late maturation steps of the functional core of the 30S ribosomal subunit. Associates with free 30S ribosomal subunits (but not with 30S subunits that are part of 70S ribosomes or polysomes). Required for efficient processing of 16S rRNA. May interact with the 5'-terminal helix region of 16S rRNA. The sequence is that of Ribosome-binding factor A from Clostridium perfringens (strain 13 / Type A).